Here is a 309-residue protein sequence, read N- to C-terminus: Putative ankyrin repeat protein R603 (309 aa).

7 ANK repeats span residues 53–82, 83–112, 114–144, 145–176, 177–206, 214–243, and 245–274; these read QVNG…MNPE, NKSQ…DVSL, DHFA…DVTS, NNNL…DIHA, DEYF…DVNM, NVLS…DISF, and DDND…DISF.

The chain is Putative ankyrin repeat protein R603 from Acanthamoeba polyphaga (Amoeba).